The chain runs to 1504 residues: NAC-alpha domain-containing protein 1 (1504 aa).

Disordered stretches follow at residues 127–150 (KPGA…ASAW), 208–261 (DREG…HGPH), 315–356 (PSDW…SSWS), 396–436 (LPQE…STSA), 460–525 (DTSA…TNSQ), 539–565 (GLES…TPTV), 701–812 (VLPP…EEGV), 834–1064 (DLES…LPVA), 1099–1366 (PFQH…AMSK), and 1430–1467 (PSEP…GLEP). Residues 342 to 354 (SSESSLSADSSSS) are compositionally biased toward low complexity. Residues 398–407 (QEEEEDEEDV) are compositionally biased toward acidic residues. Low complexity-rich tracts occupy residues 408–422 (AATA…ATPD) and 462–475 (SAAS…SYAG). Residues 510–525 (STPQTSEQEICLTNSQ) are compositionally biased toward polar residues. Residues 775 to 792 (PQESPTASSLTLQSSHPT) show a composition bias toward polar residues. A compositionally biased stretch (low complexity) spans 930–939 (PPASNQAQQN). The span at 958–968 (STLSTKTSEPT) shows a compositional bias: polar residues. Basic and acidic residues predominate over residues 989–1005 (EAHDGVKTHSPQREALR). S998 is modified (phosphoserine). Positions 1016-1031 (SPGQGNGPKSATSQGA) are enriched in polar residues. A compositionally biased stretch (pro residues) spans 1159–1171 (PGPPDPCLCPPPQ). Polar residues predominate over residues 1213-1222 (VSLSPHSTLN). S1268 carries the phosphoserine modification. The region spanning 1354-1419 (SRSEKKARKA…AKIEDLSQQV (66 aa)) is the NAC-A/B domain. Positions 1451-1464 (EEQEEEDEEVEEAG) are enriched in acidic residues.

Belongs to the NAC-alpha family.

The protein resides in the cytoplasm. The protein localises to the nucleus. Functionally, may prevent inappropriate targeting of non-secretory polypeptides to the endoplasmic reticulum (ER). May bind to nascent polypeptide chains as they emerge from the ribosome and block their interaction with the signal recognition particle (SRP), which normally targets nascent secretory peptides to the ER. May also reduce the inherent affinity of ribosomes for protein translocation sites in the ER membrane (M sites). The polypeptide is NAC-alpha domain-containing protein 1 (Nacad) (Mus musculus (Mouse)).